A 115-amino-acid polypeptide reads, in one-letter code: Holo-[acyl-carrier-protein] synthase (115 aa).

Mg(2+) is bound by residues Asp8 and Glu56.

This sequence belongs to the P-Pant transferase superfamily. AcpS family. The cofactor is Mg(2+).

Its subcellular location is the cytoplasm. The catalysed reaction is apo-[ACP] + CoA = holo-[ACP] + adenosine 3',5'-bisphosphate + H(+). Its function is as follows. Transfers the 4'-phosphopantetheine moiety from coenzyme A to a Ser of acyl-carrier-protein. The sequence is that of Holo-[acyl-carrier-protein] synthase from Ureaplasma parvum serovar 3 (strain ATCC 27815 / 27 / NCTC 11736).